Reading from the N-terminus, the 222-residue chain is Triosephosphate isomerase (222 aa).

Substrate is bound at residue 9–11 (NYK). The active-site Electrophile is His93. Glu141 serves as the catalytic Proton acceptor. Residues Ile146, Gly181, and 202–203 (AS) each bind substrate.

This sequence belongs to the triosephosphate isomerase family. Homotetramer; dimer of dimers.

It localises to the cytoplasm. It catalyses the reaction D-glyceraldehyde 3-phosphate = dihydroxyacetone phosphate. Its pathway is carbohydrate biosynthesis; gluconeogenesis. It participates in carbohydrate degradation; glycolysis; D-glyceraldehyde 3-phosphate from glycerone phosphate: step 1/1. In terms of biological role, involved in the gluconeogenesis. Catalyzes stereospecifically the conversion of dihydroxyacetone phosphate (DHAP) to D-glyceraldehyde-3-phosphate (G3P). This is Triosephosphate isomerase from Methanosarcina barkeri (strain Fusaro / DSM 804).